The sequence spans 270 residues: Putative pyruvate, phosphate dikinase regulatory protein (270 aa).

153 to 160 provides a ligand contact to ADP; the sequence is GVSRTSKT.

This sequence belongs to the pyruvate, phosphate/water dikinase regulatory protein family. PDRP subfamily.

It catalyses the reaction N(tele)-phospho-L-histidyl/L-threonyl-[pyruvate, phosphate dikinase] + ADP = N(tele)-phospho-L-histidyl/O-phospho-L-threonyl-[pyruvate, phosphate dikinase] + AMP + H(+). It carries out the reaction N(tele)-phospho-L-histidyl/O-phospho-L-threonyl-[pyruvate, phosphate dikinase] + phosphate + H(+) = N(tele)-phospho-L-histidyl/L-threonyl-[pyruvate, phosphate dikinase] + diphosphate. Functionally, bifunctional serine/threonine kinase and phosphorylase involved in the regulation of the pyruvate, phosphate dikinase (PPDK) by catalyzing its phosphorylation/dephosphorylation. The chain is Putative pyruvate, phosphate dikinase regulatory protein from Halalkalibacterium halodurans (strain ATCC BAA-125 / DSM 18197 / FERM 7344 / JCM 9153 / C-125) (Bacillus halodurans).